The chain runs to 393 residues: Nucleosome assembly protein 1-like 1 (393 aa).

Residues 1 to 10 (MANIDNKEQT) show a composition bias toward basic and acidic residues. Disordered stretches follow at residues 1 to 36 (MANI…NSKA) and 132 to 165 (ECEW…KEDP). 2 stretches are compositionally biased toward acidic residues: residues 11-30 (ELDQ…EAGE) and 132-144 (ECEW…EDIS). Residues 126 to 151 (YEPTEEECEWKVDEEEDISGDLKDKA) carry the NAP1L motif motif. A compositionally biased stretch (basic and acidic residues) spans 145–165 (GDLKDKAKLEEEKKDEEKEDP). The Nuclear localization signal motif lies at 274–280 (IKKKQKH). A compositionally biased stretch (acidic residues) spans 347–378 (AIEDDDDDYDEEGEEADDEEGEEEADEDNDPD). Positions 347-393 (AIEDDDDDYDEEGEEADDEEGEEEADEDNDPDYEPKKDQNPAECKQQ) are disordered. Positions 379–393 (YEPKKDQNPAECKQQ) are enriched in basic and acidic residues.

The protein belongs to the nucleosome assembly protein (NAP) family. In terms of assembly, forms homomultimers. Interacts with histone B4. Interacts with the B-type cyclins ccnb1 and ccnb2. Post-translationally, phosphorylated by cyclin B-cdc2 kinase complexes.

It localises to the cytoplasm. It is found in the nucleus. Its function is as follows. Acts as a chaperone for the linker histone to facilitate deposition of histone B4 onto linker DNA. Required for both remodeling of sperm chromatin into nucleosomes, and linker histone binding to nucleosome core dimers. Plays a role in tissue-specific gene regulation. Required for primitive hemopoiesis, acting upstream of tal1/scl. The sequence is that of Nucleosome assembly protein 1-like 1 from Xenopus tropicalis (Western clawed frog).